A 352-amino-acid chain; its full sequence is UPF0324 membrane protein RA0957 (352 aa).

A run of 10 helical transmembrane segments spans residues 24-43 (VVSY…SAQF), 48-67 (YGAP…NFLS), 104-126 (LGVS…AIIV), 136-158 (LSLL…LNAV), 169-191 (LALT…PVLA), 201-223 (SGVF…FAMS), 235-257 (IVRV…VLGA), 272-294 (GFVL…AAAG), 301-318 (SRWL…KTSV), and 328-350 (HVTL…LLWY).

Belongs to the UPF0324 family.

Its subcellular location is the cell membrane. This Rhizobium meliloti (strain 1021) (Ensifer meliloti) protein is UPF0324 membrane protein RA0957.